A 206-amino-acid chain; its full sequence is MKSVGNLSPNTSLLFICDIQSKFENHIFKFNDVVGQSKYMIKICNELKVPIIFTEQYPKGLGHTVEDLLKERNENNQTKIFEKTLYSMCTNEVLNHLKQNHKDLKSILITGIETHVCVLQSTLDFLENGYDVHILSDAVSSNNNNDRLIALERMRQSGAFITTTETITFQLTKDAKHKSFKNIVPLSQERREYLLANPSLSSLSKL.

It belongs to the isochorismatase family.

The polypeptide is Isochorismatase family protein 1A (Dictyostelium discoideum (Social amoeba)).